We begin with the raw amino-acid sequence, 343 residues long: Uroporphyrinogen decarboxylase (343 aa).

Substrate-binding positions include 23 to 27, D73, Y151, S206, and H319; that span reads RQAGR.

The protein belongs to the uroporphyrinogen decarboxylase family. In terms of assembly, homodimer.

It is found in the cytoplasm. It catalyses the reaction uroporphyrinogen III + 4 H(+) = coproporphyrinogen III + 4 CO2. The protein operates within porphyrin-containing compound metabolism; protoporphyrin-IX biosynthesis; coproporphyrinogen-III from 5-aminolevulinate: step 4/4. In terms of biological role, catalyzes the decarboxylation of four acetate groups of uroporphyrinogen-III to yield coproporphyrinogen-III. The polypeptide is Uroporphyrinogen decarboxylase (Sulfurimonas denitrificans (strain ATCC 33889 / DSM 1251) (Thiomicrospira denitrificans (strain ATCC 33889 / DSM 1251))).